The primary structure comprises 296 residues: uncharacterized protein (296 aa).

A run of 2 helical transmembrane segments spans residues 82-102 (VVAP…WSVQ) and 117-137 (ISVL…SAIF).

It is found in the cell membrane. This is an uncharacterized protein from Sinorhizobium fredii (strain NBRC 101917 / NGR234).